Here is a 113-residue protein sequence, read N- to C-terminus: Nucleoid-associated protein P9303_00241 (113 aa).

The segment at 90–113 is disordered; sequence TTTMKEQMEELTGGLNLNLPGMSD.

Belongs to the YbaB/EbfC family. Homodimer.

It localises to the cytoplasm. The protein localises to the nucleoid. In terms of biological role, binds to DNA and alters its conformation. May be involved in regulation of gene expression, nucleoid organization and DNA protection. This Prochlorococcus marinus (strain MIT 9303) protein is Nucleoid-associated protein P9303_00241.